Consider the following 120-residue polypeptide: U13-lycotoxin-Ls1e (120 aa).

The first 16 residues, 1–16 (MKILFVLISILYAVYC), serve as a signal peptide directing secretion. Residues 17-54 (FSSEEDVDSAYLANELEPVEDINSEQYAALEPKEEQER) constitute a propeptide that is removed on maturation. Cystine bridges form between cysteine 56/cysteine 70, cysteine 63/cysteine 76, cysteine 69/cysteine 87, and cysteine 78/cysteine 85. The Agouti domain occupies 56-95 (CAGMGRDCKDDCDCCLNIATCNCWFGRYFCSCTFGDYQTC).

Belongs to the neurotoxin 05 (agouti) family. Contains 6 disulfide bonds. Expressed by the venom gland.

It is found in the secreted. The protein is U13-lycotoxin-Ls1e of Lycosa singoriensis (Wolf spider).